A 426-amino-acid chain; its full sequence is 3-phosphoshikimate 1-carboxyvinyltransferase (426 aa).

3-phosphoshikimate-binding residues include Lys22, Ser23, and Arg27. A phosphoenolpyruvate-binding site is contributed by Lys22. Phosphoenolpyruvate-binding residues include Gly96 and Arg124. Residues Ser170 and Ser171 each contribute to the 3-phosphoshikimate site. Gln172 lines the phosphoenolpyruvate pocket. 3-phosphoshikimate is bound by residues Ser198, Asp314, Asn337, and Lys341. Catalysis depends on Asp314, which acts as the Proton acceptor. Residues Arg345, Arg387, and Lys412 each contribute to the phosphoenolpyruvate site.

This sequence belongs to the EPSP synthase family. In terms of assembly, homotetramer.

The protein resides in the cytoplasm. The enzyme catalyses 3-phosphoshikimate + phosphoenolpyruvate = 5-O-(1-carboxyvinyl)-3-phosphoshikimate + phosphate. Its pathway is metabolic intermediate biosynthesis; chorismate biosynthesis; chorismate from D-erythrose 4-phosphate and phosphoenolpyruvate: step 6/7. Catalyzes the transfer of the enolpyruvyl moiety of phosphoenolpyruvate (PEP) to the 5-hydroxyl of shikimate-3-phosphate (S3P) to produce enolpyruvyl shikimate-3-phosphate and inorganic phosphate. The polypeptide is 3-phosphoshikimate 1-carboxyvinyltransferase (Vibrio cholerae serotype O1 (strain ATCC 39315 / El Tor Inaba N16961)).